The primary structure comprises 222 residues: UPF0758 protein YPN_3801 (222 aa).

The 123-residue stretch at 100–222 (VLLNPGITQK…CVSFAERGWL (123 aa)) folds into the MPN domain. Zn(2+)-binding residues include H171, H173, and D184. Residues 171-184 (HNHPSGKAEPSQAD) carry the JAMM motif motif.

Belongs to the UPF0758 family. YicR subfamily.

The sequence is that of UPF0758 protein YPN_3801 from Yersinia pestis bv. Antiqua (strain Nepal516).